We begin with the raw amino-acid sequence, 121 residues long: Large ribosomal subunit protein bL12 (121 aa).

It belongs to the bacterial ribosomal protein bL12 family. As to quaternary structure, homodimer. Part of the ribosomal stalk of the 50S ribosomal subunit. Forms a multimeric L10(L12)X complex, where L10 forms an elongated spine to which 2 to 4 L12 dimers bind in a sequential fashion. Binds GTP-bound translation factors.

In terms of biological role, forms part of the ribosomal stalk which helps the ribosome interact with GTP-bound translation factors. Is thus essential for accurate translation. This chain is Large ribosomal subunit protein bL12, found in Vibrio atlanticus (strain LGP32) (Vibrio splendidus (strain Mel32)).